Here is a 209-residue protein sequence, read N- to C-terminus: Orotate phosphoribosyltransferase (209 aa).

Residues arginine 96, lysine 100, histidine 102, and 122–130 (EDLISTGGS) each bind 5-phospho-alpha-D-ribose 1-diphosphate. Serine 126 provides a ligand contact to orotate.

This sequence belongs to the purine/pyrimidine phosphoribosyltransferase family. PyrE subfamily. Homodimer. Mg(2+) is required as a cofactor.

It catalyses the reaction orotidine 5'-phosphate + diphosphate = orotate + 5-phospho-alpha-D-ribose 1-diphosphate. The protein operates within pyrimidine metabolism; UMP biosynthesis via de novo pathway; UMP from orotate: step 1/2. Catalyzes the transfer of a ribosyl phosphate group from 5-phosphoribose 1-diphosphate to orotate, leading to the formation of orotidine monophosphate (OMP). This chain is Orotate phosphoribosyltransferase, found in Cytophaga hutchinsonii (strain ATCC 33406 / DSM 1761 / CIP 103989 / NBRC 15051 / NCIMB 9469 / D465).